The sequence spans 892 residues: Translation initiation factor IF-2 (892 aa).

Positions 165–175 (EEQAELERQKT) are enriched in basic and acidic residues. 2 disordered regions span residues 165 to 250 (EEQA…EDDS) and 264 to 300 (ERAR…AHGF). Low complexity predominate over residues 208-222 (PRAVRPAPAARPSVS). A tr-type G domain is found at 391–560 (PRPPVVTIMG…SIQAEVLELK (170 aa)). GTP is bound by residues 400–407 (GHVDHGKT), 446–450 (DTPGH), and 500–503 (SKID).

Belongs to the TRAFAC class translation factor GTPase superfamily. Classic translation factor GTPase family. IF-2 subfamily.

It localises to the cytoplasm. One of the essential components for the initiation of protein synthesis. Protects formylmethionyl-tRNA from spontaneous hydrolysis and promotes its binding to the 30S ribosomal subunits. Also involved in the hydrolysis of GTP during the formation of the 70S ribosomal complex. In Xylella fastidiosa (strain 9a5c), this protein is Translation initiation factor IF-2.